Consider the following 1134-residue polypeptide: Nck-associated protein 1-like (1134 aa).

A disordered region spans residues 638–671 (KAKNKKSMKQRQAPRKGEPERDKPGAESHRKNRS). The span at 639 to 651 (AKNKKSMKQRQAP) shows a compositional bias: basic residues. A compositionally biased stretch (basic and acidic residues) spans 652–666 (RKGEPERDKPGAESH). The chain crosses the membrane as a helical span at residues 999-1019 (LLLIFLAVSLPLLATDPSSFF).

In terms of assembly, in hematopoietic cells, component of the WAVE2 complex composed of ABI1, CYFIP1/SRA1, NCKAP1L/HEM1 and WASF2/WAVE2. Interacts with ARHGAP4, PIK3C3/VPS34 and PPP1R12A/MYPT1. Interacts with mammalian target of rapamycin complex 2 (mTORC2) components, including MTOR and RICTOR. As to expression, predominantly expressed in developing and mature hematopoietic cells. Also detected in urogenital tissues, including testis.

The protein resides in the membrane. It localises to the cytoplasm. Its function is as follows. Essential hematopoietic-specific regulator of the actin cytoskeleton. Controls lymphocyte development, activation, proliferation and homeostasis, erythrocyte membrane stability, as well as phagocytosis and migration by neutrophils and macrophages. Component of the WAVE2 complex which signals downstream of RAC to stimulate F-actin polymerization. Required for stabilization and/or translation of the WAVE2 complex proteins in hematopoietic cells. Within the WAVE2 complex, enables the cortical actin network to restrain excessive degranulation and granule release by T-cells. Required for efficient T-lymphocyte and neutrophil migration. Exhibits complex cycles of activation and inhibition to generate waves of propagating the assembly with actin. Also involved in mechanisms WAVE independent to regulate myosin and actin polymerization during neutrophil chemotaxis. In T-cells, required for proper mechanistic target of rapamycin complex 2 (mTORC2)-dependent AKT phosphorylation, cell proliferation and cytokine secretion, including that of IL2 and TNF. The chain is Nck-associated protein 1-like from Mus musculus (Mouse).